The chain runs to 368 residues: Probable protein phosphatase 2C 58 (368 aa).

One can recognise a PPM-type phosphatase domain in the interval Lys-23–Phe-329. Residues Asp-57, Gly-58, Asp-272, and Asp-320 each coordinate Mn(2+). A disordered region spans residues Asn-336–Ser-368. The span at His-356–Ser-368 shows a compositional bias: basic and acidic residues.

This sequence belongs to the PP2C family. Requires Mg(2+) as cofactor. Mn(2+) serves as cofactor.

The enzyme catalyses O-phospho-L-seryl-[protein] + H2O = L-seryl-[protein] + phosphate. It catalyses the reaction O-phospho-L-threonyl-[protein] + H2O = L-threonyl-[protein] + phosphate. The sequence is that of Probable protein phosphatase 2C 58 from Oryza sativa subsp. japonica (Rice).